A 323-amino-acid polypeptide reads, in one-letter code: Thymidylate synthase (323 aa).

Residues R21 and 172 to 173 (RR) each bind dUMP. C192 functions as the Nucleophile in the catalytic mechanism. Residues 214–217 (RSND), N225, and 255–257 (HVY) each bind dUMP. Residue D217 coordinates (6R)-5,10-methylene-5,6,7,8-tetrahydrofolate. A (6R)-5,10-methylene-5,6,7,8-tetrahydrofolate-binding site is contributed by A322.

Belongs to the thymidylate synthase family. Bacterial-type ThyA subfamily. As to quaternary structure, homodimer.

Its subcellular location is the cytoplasm. It carries out the reaction dUMP + (6R)-5,10-methylene-5,6,7,8-tetrahydrofolate = 7,8-dihydrofolate + dTMP. Its pathway is pyrimidine metabolism; dTTP biosynthesis. Catalyzes the reductive methylation of 2'-deoxyuridine-5'-monophosphate (dUMP) to 2'-deoxythymidine-5'-monophosphate (dTMP) while utilizing 5,10-methylenetetrahydrofolate (mTHF) as the methyl donor and reductant in the reaction, yielding dihydrofolate (DHF) as a by-product. This enzymatic reaction provides an intracellular de novo source of dTMP, an essential precursor for DNA biosynthesis. This chain is Thymidylate synthase, found in Pseudomonas putida (strain ATCC 47054 / DSM 6125 / CFBP 8728 / NCIMB 11950 / KT2440).